Here is a 149-residue protein sequence, read N- to C-terminus: Endothelin-1 (149 aa).

A propeptide spanning residues Ala-1–Ser-33 is cleaved from the precursor. The segment at Val-6–Ala-26 is disordered. Disulfide bonds link Cys-36–Cys-50 and Cys-38–Cys-46. A propeptide spanning residues Val-57–Lys-149 is cleaved from the precursor. Positions Cys-93–Cys-107 are endothelin-like.

This sequence belongs to the endothelin/sarafotoxin family.

The protein resides in the secreted. Endothelins are endothelium-derived vasoconstrictor peptides. Probable ligand for G-protein coupled receptors EDNRA and EDNRB which activates PTK2B, BCAR1, BCAR3 and, GTPases RAP1 and RHOA cascade in glomerular mesangial cells. Also binds the DEAR/FBXW7-AS1 receptor. Promotes mesenteric arterial wall remodeling via activation of ROCK signaling and subsequent colocalization of NFATC3 with F-actin filaments. NFATC3 then translocates to the nucleus where it subsequently promotes the transcription of the smooth muscle hypertrophy and differentiation marker ACTA2. This is Endothelin-1 (EDN1) from Cavia porcellus (Guinea pig).